A 122-amino-acid chain; its full sequence is Large ribosomal subunit protein uL14c (122 aa).

It belongs to the universal ribosomal protein uL14 family. In terms of assembly, part of the 50S ribosomal subunit.

The protein resides in the plastid. It localises to the chloroplast. In terms of biological role, binds to 23S rRNA. The chain is Large ribosomal subunit protein uL14c from Cucumis sativus (Cucumber).